The following is a 1032-amino-acid chain: Protein phosphatase 1 regulatory subunit 12A (1032 aa).

The KVKF motif motif lies at 35–38 (KVKF). 6 ANK repeats span residues 39–68 (DDGA…DINY), 72–101 (DGLT…NINQ), 105–134 (EGWI…HVGA), 138–164 (EGDT…RQGV), 198–227 (SGGT…DVNI), and 231–260 (DGWT…DMET). (3S)-3-hydroxyasparagine; by HIF1AN is present on residues Asn67 and Asn100. Residue Asn226 is modified to (3S)-3-hydroxyasparagine; by HIF1AN. Disordered stretches follow at residues 290-553 (LHSE…HRSC) and 588-928 (SSTS…RLEK). Positions 291 to 300 (HSEKRDKKSP) are enriched in basic and acidic residues. Ser299 carries the post-translational modification Phosphoserine. The span at 302-316 (IESTANMENNQPQKT) shows a compositional bias: polar residues. Residues 318-340 (KNKETLIIEPEKNASRIESLEQE) show a composition bias toward basic and acidic residues. Positions 357–369 (SEEDEEDDSESEA) are enriched in acidic residues. Positions 383-399 (AHTASTQAAPAAVTTPT) are enriched in low complexity. Polar residues predominate over residues 400–421 (LSSNQGTPTSPVKKFPTSTTKI). A phosphoserine mark is found at Ser422 and Ser432. The span at 422–432 (SPKEEERKDES) shows a compositional bias: basic and acidic residues. At Thr443 the chain carries Phosphothreonine. Ser445 is subject to Phosphoserine. Tyr446 carries the post-translational modification Phosphotyrosine. The segment covering 469-480 (RSASSPRLSSSL) has biased composition (low complexity). Phosphoserine; by NUAK1 is present on Ser472. A Phosphoserine; by CDK1 modification is found at Ser473. Ser477 bears the Phosphoserine mark. The span at 481–491 (DNKEKEKDNKG) shows a compositional bias: basic and acidic residues. A phosphoserine mark is found at Ser507 and Ser509. Residues 540–551 (NSSINEGSTYHR) show a composition bias toward polar residues. Ser601 bears the Phosphoserine mark. Residues 602–612 (PAGTQSSTSNR) show a composition bias toward polar residues. Basic and acidic residues predominate over residues 614 to 625 (WAEDSTEKEKDS). Ser618 carries the phosphoserine modification. A compositionally biased stretch (low complexity) spans 633–661 (LVAPTVVSAAASSTTALTTTTAGTLSSTS). Over residues 674-683 (VRDEESESQR) the composition is skewed to basic and acidic residues. Residues 683 to 866 (RKARSRQARQ…VSFWTQDSDE (184 aa)) are interaction with ROCK2. Residues 684–694 (KARSRQARQSR) are compositionally biased toward basic residues. Residues Ser693 and Ser696 each carry the phosphoserine; by PKA and PKG; in vitro modification. Thr697 carries the phosphothreonine; by ROCK1, ROCK2, CDC42BP, ZIPK/DAPK3 and RAF1 modification. Residues 719 to 768 (RTREQENEEKDKEEKEKQDKEKQEEKKESEVSREDEYKQKYSRTYDETYA) show a composition bias toward basic and acidic residues. Low complexity predominate over residues 774–797 (STSSSSTPSSSSLSTLGSSLYASS). Residues 798–812 (QLNRPNSLVGITSAY) are compositionally biased toward polar residues. Ser804 carries the phosphoserine modification. Basic and acidic residues predominate over residues 816–842 (LTKDNEREGEKKEEEKEGEDKSQPKSI). Residues 843–854 (RERRRPREKRRS) are compositionally biased toward basic residues. Residue Ser854 is modified to Phosphoserine; by ROCK2. Phosphoserine occurs at positions 864 and 873. Residues 869-885 (QERQSDTEDGSSKRDTQ) show a composition bias toward basic and acidic residues. Low complexity predominate over residues 886-900 (TDSVSRYDSSSTSSS). Residues Ser905 and Ser910 each carry the phosphoserine modification. Ser912 carries the post-translational modification Phosphoserine; by NUAK1. Basic and acidic residues predominate over residues 916 to 928 (LEERKPYGSRLEK). At Ser997 the chain carries Phosphoserine.

In terms of assembly, PP1 comprises a catalytic subunit, PPP1CA, PPP1CB or PPP1CC, and one or several targeting or regulatory subunits. PPP1R12A mediates binding to myosin. Interacts with ARHA and CIT. Binds PPP1R12B, ROCK1 and IL16. Interacts directly with PRKG1. Non-covalent dimer of 2 dimers; PRKG1-PRKG1 and PPP1R12A-PPP1R12A. Interacts with SMTNL1. Interacts with PPP1CB; the interaction is direct. Interacts (when phosphorylated at Ser-445, Ser-472 and Ser-910) with 14-3-3. Interacts with ROCK1 and ROCK2. Interacts with isoform 1 and isoform 2 of ZIPK/DAPK3. Interacts with RAF1. Interacts with HIF1AN. Interacts with NCKAP1L. In terms of processing, phosphorylated on upon DNA damage, probably by ATM or ATR. Phosphorylated by CIT (Rho-associated kinase). Phosphorylated cooperatively by ROCK1 and CDC42BP on Thr-697. In vitro, phosphorylation of Ser-696 by PKA and PKG appears to prevent phosphorylation of the inhibitory site Thr-697, probably mediated by PRKG1. May be phosphorylated at Thr-697 by DMPK; may inhibit the myosin phosphatase activity. Phosphorylated at Ser-473 by CDK1 during mitosis, creating docking sites for the POLO box domains of PLK1. Subsequently, PLK1 binds and phosphorylates PPP1R12A. Smooth muscle. Detected in aorta, portal vein, stomach, intestine, bladder and lung.

The protein resides in the cytoplasm. Its subcellular location is the cytoskeleton. It is found in the stress fiber. Functionally, key regulator of protein phosphatase 1C (PPP1C). Mediates binding to myosin. As part of the PPP1C complex, involved in dephosphorylation of PLK1. Capable of inhibiting HIF1AN-dependent suppression of HIF1A activity. This is Protein phosphatase 1 regulatory subunit 12A from Rattus norvegicus (Rat).